Here is a 359-residue protein sequence, read N- to C-terminus: Histidinol-phosphate aminotransferase (359 aa).

Lys-217 is subject to N6-(pyridoxal phosphate)lysine.

It belongs to the class-II pyridoxal-phosphate-dependent aminotransferase family. Histidinol-phosphate aminotransferase subfamily. Homodimer. Pyridoxal 5'-phosphate is required as a cofactor.

The catalysed reaction is L-histidinol phosphate + 2-oxoglutarate = 3-(imidazol-4-yl)-2-oxopropyl phosphate + L-glutamate. It functions in the pathway amino-acid biosynthesis; L-histidine biosynthesis; L-histidine from 5-phospho-alpha-D-ribose 1-diphosphate: step 7/9. The sequence is that of Histidinol-phosphate aminotransferase from Salmonella heidelberg (strain SL476).